We begin with the raw amino-acid sequence, 132 residues long: MIKKRKKNPYEASASGFYISMSAHKARRIIDQIRGRSYEETLMILELMPYRACYPIFKLVYSAAANASHNMGLNEASLVISKAEVNEGATMKKFKPRARGRSYLIKRQTCHISIVLEDISYEEYEEDFLRRI.

It belongs to the universal ribosomal protein uL22 family. In terms of assembly, part of the 50S ribosomal subunit.

The protein resides in the plastid. It is found in the chloroplast. Functionally, this protein binds specifically to 23S rRNA. The globular domain of the protein is located near the polypeptide exit tunnel on the outside of the subunit, while an extended beta-hairpin is found that lines the wall of the exit tunnel in the center of the 70S ribosome. This is Large ribosomal subunit protein uL22c (rpl22) from Populus trichocarpa (Western balsam poplar).